A 447-amino-acid chain; its full sequence is Probable alpha-galactosidase B (447 aa).

The signal sequence occupies residues M1–R25. Disulfide bonds link C45–C77 and C127–C157. D155 acts as the Nucleophile in catalysis. N-linked (GlcNAc...) asparagine glycosylation is found at N162 and N180. Residue E225–A229 participates in substrate binding. N236 carries an N-linked (GlcNAc...) asparagine glycan. The active-site Proton donor is the D247. The N-linked (GlcNAc...) asparagine glycan is linked to N286.

Belongs to the glycosyl hydrolase 27 family.

It is found in the secreted. The catalysed reaction is Hydrolysis of terminal, non-reducing alpha-D-galactose residues in alpha-D-galactosides, including galactose oligosaccharides, galactomannans and galactolipids.. Hydrolyzes a variety of simple alpha-D-galactoside as well as more complex molecules such as oligosaccharides and polysaccharides. This Aspergillus fumigatus (strain ATCC MYA-4609 / CBS 101355 / FGSC A1100 / Af293) (Neosartorya fumigata) protein is Probable alpha-galactosidase B (aglB).